A 368-amino-acid polypeptide reads, in one-letter code: Methionine import ATP-binding protein MetN (368 aa).

The ABC transporter domain maps to 5 to 260; it reads IELNNLSVQF…PKEALTKQFI (256 aa). 41–48 serves as a coordination point for ATP; that stretch reads GYSGAGKS.

It belongs to the ABC transporter superfamily. Methionine importer (TC 3.A.1.24) family. In terms of assembly, the complex is composed of two ATP-binding proteins (MetN), two transmembrane proteins (MetI) and a solute-binding protein (MetQ).

The protein resides in the cell membrane. It carries out the reaction L-methionine(out) + ATP + H2O = L-methionine(in) + ADP + phosphate + H(+). It catalyses the reaction D-methionine(out) + ATP + H2O = D-methionine(in) + ADP + phosphate + H(+). Part of the ABC transporter complex MetNIQ involved in methionine import. Responsible for energy coupling to the transport system. The polypeptide is Methionine import ATP-binding protein MetN (Lactococcus lactis subsp. cremoris (strain SK11)).